Reading from the N-terminus, the 122-residue chain is ATP synthase epsilon chain (122 aa).

This sequence belongs to the ATPase epsilon chain family. F-type ATPases have 2 components, CF(1) - the catalytic core - and CF(0) - the membrane proton channel. CF(1) has five subunits: alpha(3), beta(3), gamma(1), delta(1), epsilon(1). CF(0) has three main subunits: a, b and c.

It localises to the cell membrane. Functionally, produces ATP from ADP in the presence of a proton gradient across the membrane. In Rhodococcus opacus (strain B4), this protein is ATP synthase epsilon chain.